A 281-amino-acid chain; its full sequence is Probable endonuclease 4 (281 aa).

H69, H109, E145, D179, H182, H216, D229, H231, and E261 together coordinate Zn(2+).

This sequence belongs to the AP endonuclease 2 family. The cofactor is Zn(2+).

The enzyme catalyses Endonucleolytic cleavage to 5'-phosphooligonucleotide end-products.. In terms of biological role, endonuclease IV plays a role in DNA repair. It cleaves phosphodiester bonds at apurinic or apyrimidinic (AP) sites, generating a 3'-hydroxyl group and a 5'-terminal sugar phosphate. The protein is Probable endonuclease 4 of Pectobacterium carotovorum subsp. carotovorum (strain PC1).